A 60-amino-acid polypeptide reads, in one-letter code: Protein YmjC (60 aa).

A disordered region spans residues 40–60 (HKPYPTNKMQTTSGKKVIQDR).

This Escherichia coli (strain K12) protein is Protein YmjC (ymjC).